The following is a 748-amino-acid chain: Protein REPRESSOR OF SILENCING 3 (748 aa).

Residues 10 to 86 form the RRM domain; that stretch reads VRLHVGGLGE…GRLRLEKAKE (77 aa). Disordered regions lie at residues 244–318, 350–531, 579–600, and 729–748; these read KSIL…QSID, GSSK…VSDT, VDEEEAGKGPLKASNKSTGGSS, and EWAKAKKALSEPRRKKNSEE. Polar residues predominate over residues 266-288; that stretch reads THPSKNRQTISLEETGRQESSQA. Basic and acidic residues predominate over residues 294–314; the sequence is KPSEVVPDKSSDEPSRTKDLE. Basic residues predominate over residues 373–382; it reads LKKKTKRKRV. 3 stretches are compositionally biased toward acidic residues: residues 403 to 416, 439 to 472, and 491 to 518; these read DTMADDIERDDSDA, DDSDAVEDDTAIDSMADDPASDSVAESDDGDAVE, and ESDDGDNVEDDTAIDSMCDDTANDDVGS. Polar residues predominate over residues 520–531; it reads DSGSLADTVSDT.

Ubiquitously expressed.

It is found in the nucleus. It localises to the nucleolus. The protein resides in the nucleoplasm. In terms of biological role, RNA-binding protein required for DNA demethylation and to eluviate siRNA-mediated transcriptional gene silencing (TGS), probably by guiding ROS1. Can bind specifically single stranded G-rich RNAs of 21-, 24- or 26-nt corresponding to promoter sequence of target genes; this interaction directs demethylation of target sequences. This is Protein REPRESSOR OF SILENCING 3 from Arabidopsis thaliana (Mouse-ear cress).